Consider the following 456-residue polypeptide: MDCAEEKAKSLRRQIADTEAELAQLKLQLLSLEEKDTNSKNLEAKTSASEKDDPVTHIENKWPMSLEEYKRYGRQMIVPDIGIKGQLRLKSASILLVGAGGLGCPAAAYIAGAGVGTIGIVDGDIVEESNLHRQILHSTDRVGVNKAGIVKDYDIVLDCTDHPTSRYLISDICVLLQKPLVSASALRTDGQLIVLNNPALPPGDLSGGSCYRCVFPKPPPPEAVTSCGDGGIIGPVVGVMGVLQALEAIKLIASGKLAAVGENDNTSPTPKMNPTTMLLFSTNGSTPFRNVRLKGRRSNCFACGEEAQLALEQMSSGSMDYVLFCGMTHPVKLLSDEERIEARDYDSIRKEKEHLLIDVREKVQFDICNIEGSYNIPFSSFQGSKGSSDHPLSTLTENLNPKTPIYVVCRLGNDSQIVTKKMKDLGLDQKGDRYIGDIKGGLRSWKEQVDGSWPEY.

Residues Gly101, Asp122, 129–133, Lys146, and 161–162 contribute to the ATP site; these read SNLHR and DH. Residues Cys210 and Cys213 each coordinate Zn(2+). Catalysis depends on Cys227, which acts as the Glycyl thioester intermediate; for adenylyltransferase activity. The Zn(2+) site is built by Cys300 and Cys303. In terms of domain architecture, Rhodanese spans 350 to 454; that stretch reads KEKEHLLIDV…WKEQVDGSWP (105 aa). Catalysis depends on Cys409, which acts as the Cysteine persulfide intermediate; for sulfurtransferase activity.

In the N-terminal section; belongs to the HesA/MoeB/ThiF family. UBA4 subfamily. Zn(2+) serves as cofactor.

The protein resides in the cytoplasm. It localises to the cytosol. The catalysed reaction is [molybdopterin-synthase sulfur-carrier protein]-C-terminal Gly-Gly + ATP + H(+) = [molybdopterin-synthase sulfur-carrier protein]-C-terminal Gly-Gly-AMP + diphosphate. It carries out the reaction [molybdopterin-synthase sulfur-carrier protein]-C-terminal Gly-Gly-AMP + S-sulfanyl-L-cysteinyl-[cysteine desulfurase] + AH2 = [molybdopterin-synthase sulfur-carrier protein]-C-terminal-Gly-aminoethanethioate + L-cysteinyl-[cysteine desulfurase] + A + AMP + 2 H(+). Its pathway is tRNA modification; 5-methoxycarbonylmethyl-2-thiouridine-tRNA biosynthesis. Its function is as follows. Plays a central role in 2-thiolation of mcm(5)S(2)U at tRNA wobble positions of cytosolic tRNA(Lys), tRNA(Glu) and tRNA(Gln). Also essential during biosynthesis of the molybdenum cofactor. Acts by mediating the C-terminal thiocarboxylation of sulfur carriers urm1 and mocs2a. Its N-terminus first activates urm1 and mocs2a as acyl-adenylates (-COAMP), then the persulfide sulfur on the catalytic cysteine is transferred to urm1 and mocs2a to form thiocarboxylation (-COSH) of their C-terminus. The reaction probably involves hydrogen sulfide that is generated from the persulfide intermediate and that acts as a nucleophile towards urm1 and mocs2a. Subsequently, a transient disulfide bond is formed. Does not use thiosulfate as sulfur donor; nfs1 probably acting as a sulfur donor for thiocarboxylation reactions. This chain is Adenylyltransferase and sulfurtransferase uba4, found in Sclerotinia sclerotiorum (strain ATCC 18683 / 1980 / Ss-1) (White mold).